Here is a 526-residue protein sequence, read N- to C-terminus: Tyrosine-protein kinase transforming protein Src (526 aa).

The disordered stretch occupies residues Met-1 to Gly-52. Residue Gly-2 is the site of N-myristoyl glycine; by host attachment. Basic and acidic residues predominate over residues Lys-7–His-25. In terms of domain architecture, SH3 spans Gly-81–Ser-142. The 98-residue stretch at Trp-148–Cys-245 folds into the SH2 domain. Residues Leu-267–Leu-517 enclose the Protein kinase domain. Residues Leu-273 to Val-281 and Lys-295 each bind ATP. Asp-386 serves as the catalytic Proton acceptor. The residue at position 416 (Tyr-416) is a Phosphotyrosine; by autocatalysis.

This sequence belongs to the protein kinase superfamily. Tyr protein kinase family. SRC subfamily. Mn(2+) is required as a cofactor. In terms of processing, the phosphorylated form is termed pp60v-src.

The catalysed reaction is L-tyrosyl-[protein] + ATP = O-phospho-L-tyrosyl-[protein] + ADP + H(+). Functionally, this phosphoprotein, required for both the initiation and the maintenance of neoplastic transformation, is a protein kinase that catalyzes the phosphorylation of tyrosine residues in vitro. The protein is Tyrosine-protein kinase transforming protein Src (V-SRC) of Gallus gallus (Chicken).